A 385-amino-acid chain; its full sequence is Eukaryotic translation initiation factor 3 subunit M (385 aa).

Residues 180-342 form the PCI domain; it reads NSELASKVMI…RKVHISSTMH (163 aa).

This sequence belongs to the eIF-3 subunit M family. As to quaternary structure, component of the eukaryotic translation initiation factor 3 (eIF-3) complex.

Its subcellular location is the cytoplasm. Component of the eukaryotic translation initiation factor 3 (eIF-3) complex, which is involved in protein synthesis of a specialized repertoire of mRNAs and, together with other initiation factors, stimulates binding of mRNA and methionyl-tRNAi to the 40S ribosome. The eIF-3 complex specifically targets and initiates translation of a subset of mRNAs involved in cell proliferation. This is Eukaryotic translation initiation factor 3 subunit M from Anopheles gambiae (African malaria mosquito).